Here is a 37-residue protein sequence, read N- to C-terminus: Cytochrome b6-f complex subunit 5 (37 aa).

A helical transmembrane segment spans residues 5–25; it reads ILLGIVLGMVVVTLAGLFVAA.

Belongs to the PetG family. The 4 large subunits of the cytochrome b6-f complex are cytochrome b6, subunit IV (17 kDa polypeptide, PetD), cytochrome f and the Rieske protein, while the 4 small subunits are PetG, PetL, PetM and PetN. The complex functions as a dimer.

Its subcellular location is the cellular thylakoid membrane. Its function is as follows. Component of the cytochrome b6-f complex, which mediates electron transfer between photosystem II (PSII) and photosystem I (PSI), cyclic electron flow around PSI, and state transitions. PetG is required for either the stability or assembly of the cytochrome b6-f complex. In Synechococcus sp. (strain JA-2-3B'a(2-13)) (Cyanobacteria bacterium Yellowstone B-Prime), this protein is Cytochrome b6-f complex subunit 5.